Consider the following 259-residue polypeptide: MTFPNINPIIFSIGPLAISWYSLSYVIGILLGWFYANKIIEKFKPQITKKNLEDFITYAVIGIIVGGRLGFVLLYNPSRYFSNPIDILKTYEGGMSFHGGALGGIITAYLFCRKYKINFLSLTDIIAPVVPIGLFLGRIANFINGELYGRITNSSFGMIFPNSDLMPRHPSQLYEAFFEGLVLFSILAYTTFKHKTLKKCGLNSGIFFTFYGLFRITIEIFREPDIQIGFILDSLTMGQILSVPMLLLGGYLICQSNPK.

4 helical membrane-spanning segments follow: residues 9–29 (IIFSIGPLAISWYSLSYVIGI), 55–75 (FITYAVIGIIVGGRLGFVLLY), 92–112 (EGGMSFHGGALGGIITAYLFC), and 117–137 (INFLSLTDIIAPVVPIGLFLG). An a 1,2-diacyl-sn-glycero-3-phospho-(1'-sn-glycerol)-binding site is contributed by arginine 138. The next 3 helical transmembrane spans lie at 172–192 (QLYEAFFEGLVLFSILAYTTF), 201–221 (GLNSGIFFTFYGLFRITIEIF), and 228–248 (IGFILDSLTMGQILSVPMLLL).

The protein belongs to the Lgt family.

It is found in the cell inner membrane. It catalyses the reaction L-cysteinyl-[prolipoprotein] + a 1,2-diacyl-sn-glycero-3-phospho-(1'-sn-glycerol) = an S-1,2-diacyl-sn-glyceryl-L-cysteinyl-[prolipoprotein] + sn-glycerol 1-phosphate + H(+). The protein operates within protein modification; lipoprotein biosynthesis (diacylglyceryl transfer). Its function is as follows. Catalyzes the transfer of the diacylglyceryl group from phosphatidylglycerol to the sulfhydryl group of the N-terminal cysteine of a prolipoprotein, the first step in the formation of mature lipoproteins. This is Phosphatidylglycerol--prolipoprotein diacylglyceryl transferase from Rickettsia africae (strain ESF-5).